The primary structure comprises 916 residues: DNA mismatch repair protein MutS (916 aa).

The disordered stretch occupies residues 1–47 (MSEALSVPAAEGENTVTASESPDLAATSARAEKVGKQEKPEKAEKQS). Positions 30 to 45 (RAEKVGKQEKPEKAEK) are enriched in basic and acidic residues. 656-663 (GPNMGGKS) serves as a coordination point for ATP. A compositionally biased stretch (polar residues) spans 843 to 861 (ADATPTPQMDLFSAQSSPS). A disordered region spans residues 843–880 (ADATPTPQMDLFSAQSSPSADDEDDKSAGQSAVPPAQA).

The protein belongs to the DNA mismatch repair MutS family.

Functionally, this protein is involved in the repair of mismatches in DNA. It is possible that it carries out the mismatch recognition step. This protein has a weak ATPase activity. The sequence is that of DNA mismatch repair protein MutS from Cupriavidus metallidurans (strain ATCC 43123 / DSM 2839 / NBRC 102507 / CH34) (Ralstonia metallidurans).